A 150-amino-acid chain; its full sequence is MMIAENAPFWRRKTLEELSQQEWESLCDGCGLCCLQKLEDEDDNSVYYTRIACKLLDLNTCQCSDYPNRFAQVPDCIQLTPGKADQFKWLPSTCGYRLVSEGKDLPAWHHLVCGDRQQVHEQRISQSGRMLSEHDVHEDDWEDHLIFRAS.

The protein belongs to the UPF0260 family.

The protein is UPF0260 protein PP_4587 of Pseudomonas putida (strain ATCC 47054 / DSM 6125 / CFBP 8728 / NCIMB 11950 / KT2440).